A 199-amino-acid polypeptide reads, in one-letter code: Recombination protein RecR (199 aa).

Residues 59-74 (CLNCGNVGTSDICALC) form a C4-type zinc finger. The 95-residue stretch at 82–176 (GELCVVEDVA…KLTSLAQGVP (95 aa)) folds into the Toprim domain.

The protein belongs to the RecR family.

In terms of biological role, may play a role in DNA repair. It seems to be involved in an RecBC-independent recombinational process of DNA repair. It may act with RecF and RecO. The sequence is that of Recombination protein RecR from Ruegeria sp. (strain TM1040) (Silicibacter sp.).